The primary structure comprises 629 residues: Serine/threonine-protein kinase ICK (629 aa).

One can recognise a Protein kinase domain in the interval Y4–F284. ATP is bound by residues L10–V18 and K33. The Proton acceptor role is filled by D125. Phosphothreonine; by CDK7 is present on T157. Y159 carries the post-translational modification Phosphotyrosine. Position 161 is a phosphoserine (S161). 3 disordered regions span residues I292–N376, S455–K483, and S581–R629. The segment covering D296–D306 has biased composition (basic and acidic residues). The span at G309 to Q321 shows a compositional bias: pro residues. 2 stretches are compositionally biased toward low complexity: residues A322–S344 and S457–S470.

It belongs to the protein kinase superfamily. CMGC Ser/Thr protein kinase family. CDC2/CDKX subfamily. Requires Mg(2+) as cofactor. Post-translationally, autophosphorylated on serine and threonine residues. Phosphorylation at Thr-157 by CDK7/Cak1p increases kinase activity. Highly expressed in colon and lung, lower levels present in heart, esophagus, stomach, small intestine and ovary. Localizes to the crypt region of large and small intestine.

The protein resides in the cytoplasm. It localises to the cytosol. The protein localises to the cell projection. It is found in the cilium. Its subcellular location is the nucleus. The protein resides in the cytoskeleton. It localises to the cilium basal body. It catalyses the reaction L-seryl-[protein] + ATP = O-phospho-L-seryl-[protein] + ADP + H(+). It carries out the reaction L-threonyl-[protein] + ATP = O-phospho-L-threonyl-[protein] + ADP + H(+). Its function is as follows. Has an essential role in ciliogenesis, particularly in neuronal and retinal progenitor cells. Phosphorylates KIF3A. Involved in the control of ciliary length. Regulates the ciliary localization of SHH pathway components as well as the localization of IFT components at ciliary tips. May play a role in cardiac development. Regulates intraflagellar transport (IFT) speed and negatively regulates cilium length in a cAMP and mTORC1 signaling -dependent manner and this regulation requires its kinase activity. This chain is Serine/threonine-protein kinase ICK (Cilk1), found in Mus musculus (Mouse).